Here is a 328-residue protein sequence, read N- to C-terminus: Thiamine thiazole synthase (328 aa).

Substrate is bound by residues A87, 108–109, G116, and V181; that span reads EA. C215 bears the 2,3-didehydroalanine (Cys) mark. Residues D217, H232, M284, and 294–296 each bind substrate; that span reads RMG.

Belongs to the THI4 family. Homooctamer. Fe cation is required as a cofactor. In terms of processing, during the catalytic reaction, a sulfide is transferred from Cys-215 to a reaction intermediate, generating a dehydroalanine residue.

Its subcellular location is the cytoplasm. It localises to the nucleus. The enzyme catalyses [ADP-thiazole synthase]-L-cysteine + glycine + NAD(+) = [ADP-thiazole synthase]-dehydroalanine + ADP-5-ethyl-4-methylthiazole-2-carboxylate + nicotinamide + 3 H2O + 2 H(+). In terms of biological role, involved in biosynthesis of the thiamine precursor thiazole. Catalyzes the conversion of NAD and glycine to adenosine diphosphate 5-(2-hydroxyethyl)-4-methylthiazole-2-carboxylic acid (ADT), an adenylated thiazole intermediate. The reaction includes an iron-dependent sulfide transfer from a conserved cysteine residue of the protein to a thiazole intermediate. The enzyme can only undergo a single turnover, which suggests it is a suicide enzyme. May have additional roles in adaptation to various stress conditions and in DNA damage tolerance. The sequence is that of Thiamine thiazole synthase (thi2) from Schizosaccharomyces pombe (strain 972 / ATCC 24843) (Fission yeast).